Consider the following 704-residue polypeptide: Elongation factor G (704 aa).

Residues 10-290 form the tr-type G domain; sequence NKVRNIGIMA…AVVDFLPNPL (281 aa). GTP is bound by residues 19–26, 83–87, and 137–140; these read AHIDAGKT, DTPGH, and NKMD.

It belongs to the TRAFAC class translation factor GTPase superfamily. Classic translation factor GTPase family. EF-G/EF-2 subfamily.

The protein localises to the cytoplasm. Catalyzes the GTP-dependent ribosomal translocation step during translation elongation. During this step, the ribosome changes from the pre-translocational (PRE) to the post-translocational (POST) state as the newly formed A-site-bound peptidyl-tRNA and P-site-bound deacylated tRNA move to the P and E sites, respectively. Catalyzes the coordinated movement of the two tRNA molecules, the mRNA and conformational changes in the ribosome. The chain is Elongation factor G from Paenarthrobacter aurescens (strain TC1).